A 782-amino-acid chain; its full sequence is Gelsolin (782 aa).

An N-terminal signal peptide occupies residues 1 to 27 (MAPHRPAPALLCALSLALCALSLPVRA). The actin-severing stretch occupies residues 53 to 176 (VVEHPEFLKA…YKKGGVASGF (124 aa)). A Gelsolin-like 1 repeat occupies 76-158 (FDLVPVPTNL…VQGFESATFL (83 aa)). Position 86 is a phosphotyrosine; by SRC; in vitro (Tyr-86). Positions 92, 93, 124, 136, 141, and 143 each coordinate Ca(2+). Residues 123–126 (DESG) form an actin-actin interfilament contact point region. 162–169 (KSGLKYKK) is an a 1,2-diacyl-sn-glycero-3-phospho-(1D-myo-inositol-4,5-bisphosphate) binding site. A Ca(2+)-binding site is contributed by Val-172. 188-196 (RLFQVKGRR) serves as a coordination point for a 1,2-diacyl-sn-glycero-3-phospho-(1D-myo-inositol-4,5-bisphosphate). The stretch at 198–270 (VRATEVPVSW…SEEGTEPEAM (73 aa)) is one Gelsolin-like 2 repeat. Gly-213 and Asp-214 together coordinate Ca(2+). Cys-215 and Cys-228 form a disulfide bridge. Residue Glu-236 participates in Ca(2+) binding. Basic and acidic residues predominate over residues 247 to 262 (IRDNERSGRARVHVSE). The interval 247-285 (IRDNERSGRARVHVSEEGTEPEAMLQVLGPKPALPAGTE) is disordered. Ca(2+) contacts are provided by Asp-286, Glu-329, Asp-330, and Glu-354. Residues 317–389 (DENPFAQGAL…LPEGGETPLF (73 aa)) form a Gelsolin-like 3 repeat. Tyr-409 is subject to Phosphotyrosine; by SRC; in vitro. The actin-binding, Ca-sensitive stretch occupies residues 434–782 (AAQHGMDDDG…LDRAMAELAA (349 aa)). One copy of the Gelsolin-like 4 repeat lies at 455 to 536 (SNKVPVDPAT…VQGKEPAHLM (82 aa)). At Tyr-465 the chain carries Phosphotyrosine; by SRC. Residues Gly-471, Asp-472, Glu-502, Asp-514, Gly-519, Pro-521, and Thr-551 each coordinate Ca(2+). The Gelsolin-like 5 repeat unit spans residues 576–642 (TRAVEVLPKA…AEGSEPDGFW (67 aa)). Lys-584 carries the N6-acetyllysine modification. Ca(2+)-binding residues include Asn-591 and Asp-592. Position 603 is a phosphotyrosine; by SRC; in vitro (Tyr-603). Ca(2+) is bound at residue Glu-614. Tyr-651 is modified (phosphotyrosine; by SRC; in vitro). The stretch at 681-756 (IEEVPGELMQ…VKQGFEPPSF (76 aa)) is one Gelsolin-like 6 repeat. Ca(2+) contacts are provided by Asp-696, Asp-697, and Glu-719. A Phosphothreonine modification is found at Thr-742.

Belongs to the villin/gelsolin family. In terms of assembly, binds to actin and to fibronectin. Identified in a complex composed of ACTA1, COBL, GSN and TMSB4X. Interacts with the inactive form of EIF2AK2/PKR. Interacts with FLII. In terms of processing, phosphorylation on Tyr-86, Tyr-409, Tyr-465, Tyr-603 and Tyr-651 in vitro is induced in presence of phospholipids. As to expression, phagocytic cells, platelets, fibroblasts, nonmuscle cells, smooth and skeletal muscle cells.

The protein localises to the cytoplasm. It is found in the cytoskeleton. Its subcellular location is the secreted. Functionally, calcium-regulated, actin-modulating protein that binds to the plus (or barbed) ends of actin monomers or filaments, preventing monomer exchange (end-blocking or capping). It can promote the assembly of monomers into filaments (nucleation) as well as sever filaments already formed. Plays a role in ciliogenesis. The chain is Gelsolin (GSN) from Homo sapiens (Human).